A 510-amino-acid chain; its full sequence is Ent-sandaracopimaradiene 3-hydroxylase (510 aa).

Residues Met4–Ala24 form a helical membrane-spanning segment. Cys454 contributes to the heme binding site.

Belongs to the cytochrome P450 family. As to quaternary structure, interacts with the rice dwarf virus (RDV) P2 protein. Heme is required as a cofactor. As to expression, expressed in leaf blades and sheaths, stems and panicles.

It is found in the membrane. The enzyme catalyses ent-sandaracopimara-8(14),15-diene + reduced [NADPH--hemoprotein reductase] + O2 = ent-sandaracopimaradien-3beta-ol + oxidized [NADPH--hemoprotein reductase] + H2O + H(+). The catalysed reaction is 9beta-pimara-7,15-diene + reduced [NADPH--hemoprotein reductase] + O2 = 9beta-pimara-7,15-diene-3beta-ol + oxidized [NADPH--hemoprotein reductase] + H2O + H(+). Catalyzes the hydroxylation of ent-sandaracopimaradiene at the C3alpha position to produce ent-3beta-hydroxy-sandaracopimaradiene, an intermediates for the biosynthesis of oryzalexin D and oryzalexin E phytoalexins. Catalyzes the hydroxylation of ent-cassadiene at the C3alpha position to produce 3alpha-hydroxy-ent-cassadiene, which may be an intermediate for the biosynthesis of phytocassane phytoalexins. Catalyzes the hydroxylation of syn-pimaradiene (9-beta-pimara-7,15-diene) at the C3beta position to produce 3-beta-syn-pimaradiene. Can hydroxylate ent-kaurene in vitro, but the product is not ent-kauren-19-ol as expected for ent-kaurene oxidase activity. The chain is Ent-sandaracopimaradiene 3-hydroxylase from Oryza sativa subsp. japonica (Rice).